We begin with the raw amino-acid sequence, 85 residues long: N.vectensis toxin 1 4 (85 aa).

The first 20 residues, methionine 1–alanine 20, serve as a signal peptide directing secretion. The propeptide occupies arginine 21 to serine 36. 3 disulfide bridges follow: cysteine 42-cysteine 82, cysteine 44-cysteine 72, and cysteine 65-cysteine 83.

It belongs to the sea anemone sodium channel inhibitory toxin family. Type II subfamily. As to expression, expressed in ectodermal glands and in clumps outside of the extodermal layer. Is not expressed in nematocytes. In adult female tissues, shows similar expression levels in mesenteries (gametes-producing tissue), tentacles, pharynx and physa.

The protein localises to the secreted. Functionally, binds to site 3 of voltage-gated sodium channels and inhibits the inactivation process. Is highly active on DmNav1/TipE (drosophila) and is only extremely weakly active on rat Nav1.4-beta-1/SCN4A-SCN1B, and on human Nav1.5-beta-1/SCN5A-beta-1. This reveals high specificity for arthropod over mammalian channels. In vivo, when released into the medium, this recombinant toxin induces impaired swimming, paralysis and death of the crustacean A.nauplii within several hours. Also causes paralysis of cherry shrimps immediately after injection at very low doses. Its effect on zebrafish (D.rerio) larvae is also rapid, since it induces tail twitching accompanied by impaired swimming after 20 minutes and complete paralysis within 45 minutes. It has also been observed to cause death of zebrafish larvae within 1 hour. This is N.vectensis toxin 1 4 from Nematostella vectensis (Starlet sea anemone).